The chain runs to 280 residues: Undecaprenyl-diphosphatase (280 aa).

Helical transmembrane passes span 3–23 (IILL…EFLP), 45–65 (VDLF…YDYW), 88–108 (QLGL…FTFA), 115–135 (LFNP…IFYV), 150–170 (VSLK…IPGT), 191–211 (AEFS…LDFI), 225–245 (VLGI…RLLV), and 255–275 (IFAW…WGFG).

The protein belongs to the UppP family.

It is found in the cell inner membrane. The enzyme catalyses di-trans,octa-cis-undecaprenyl diphosphate + H2O = di-trans,octa-cis-undecaprenyl phosphate + phosphate + H(+). Functionally, catalyzes the dephosphorylation of undecaprenyl diphosphate (UPP). Confers resistance to bacitracin. The protein is Undecaprenyl-diphosphatase of Psychrobacter cryohalolentis (strain ATCC BAA-1226 / DSM 17306 / VKM B-2378 / K5).